Here is a 709-residue protein sequence, read N- to C-terminus: Polyribonucleotide nucleotidyltransferase (709 aa).

Mg(2+)-binding residues include Asp-487 and Asp-493. The KH domain occupies 554–613 (PRIHTMKISVEKIKDVIGKGGAVIRQLTEETGTTIEIEDDGTIKIAATDGDQAKEAIRRI). Residues 623-691 (GVIYTGKVAR…RQGRVRLSMK (69 aa)) form the S1 motif domain.

It belongs to the polyribonucleotide nucleotidyltransferase family. As to quaternary structure, component of the RNA degradosome, which is a multiprotein complex involved in RNA processing and mRNA degradation. Mg(2+) is required as a cofactor.

The protein resides in the cytoplasm. The enzyme catalyses RNA(n+1) + phosphate = RNA(n) + a ribonucleoside 5'-diphosphate. Its function is as follows. Involved in mRNA degradation. Catalyzes the phosphorolysis of single-stranded polyribonucleotides processively in the 3'- to 5'-direction. This chain is Polyribonucleotide nucleotidyltransferase, found in Vibrio cholerae serotype O1 (strain ATCC 39315 / El Tor Inaba N16961).